We begin with the raw amino-acid sequence, 143 residues long: Lysozyme C (143 aa).

The first 15 residues, 1–15 (MRCLLLLLLVPVPGA), serve as a signal peptide directing secretion. Positions 16–143 (KVFERCEWAR…LSSYVAGCGV (128 aa)) constitute a C-type lysozyme domain. 4 disulfides stabilise this stretch: Cys21-Cys141, Cys45-Cys129, Cys79-Cys94, and Cys90-Cys108. Active-site residues include Glu50 and Asp67.

Belongs to the glycosyl hydrolase 22 family. As to quaternary structure, monomer.

Its subcellular location is the secreted. The catalysed reaction is Hydrolysis of (1-&gt;4)-beta-linkages between N-acetylmuramic acid and N-acetyl-D-glucosamine residues in a peptidoglycan and between N-acetyl-D-glucosamine residues in chitodextrins.. Lysozymes have primarily a bacteriolytic function; those in tissues and body fluids are associated with the monocyte-macrophage system and enhance the activity of immunoagents. The protein is Lysozyme C (lys) of Scophthalmus maximus (Turbot).